We begin with the raw amino-acid sequence, 196 residues long: GTP cyclohydrolase-2 (196 aa).

GTP is bound at residue 49-53; the sequence is RVHSE. Cys54, Cys65, and Cys67 together coordinate Zn(2+). GTP contacts are provided by residues Gln70, 92 to 94, and Thr114; that span reads EGR. Asp126 (proton acceptor) is an active-site residue. Residue Arg128 is the Nucleophile of the active site. GTP is bound by residues Thr149 and Lys154.

It belongs to the GTP cyclohydrolase II family. In terms of assembly, homodimer. It depends on Zn(2+) as a cofactor.

The enzyme catalyses GTP + 4 H2O = 2,5-diamino-6-hydroxy-4-(5-phosphoribosylamino)-pyrimidine + formate + 2 phosphate + 3 H(+). It functions in the pathway cofactor biosynthesis; riboflavin biosynthesis; 5-amino-6-(D-ribitylamino)uracil from GTP: step 1/4. Catalyzes the conversion of GTP to 2,5-diamino-6-ribosylamino-4(3H)-pyrimidinone 5'-phosphate (DARP), formate and pyrophosphate. This Yersinia pestis protein is GTP cyclohydrolase-2.